Reading from the N-terminus, the 45-residue chain is MSKRTFQPNNRRRAKTHGFRLRMRTRAGRAILANRRAKGRASLSA.

The protein belongs to the bacterial ribosomal protein bL34 family.

This Streptomyces bikiniensis protein is Large ribosomal subunit protein bL34 (rpmH).